The sequence spans 351 residues: Translation initiation factor eIF2B subunit beta (351 aa).

Belongs to the eIF-2B alpha/beta/delta subunits family. As to quaternary structure, component of the translation initiation factor 2B (eIF2B) complex which is a heterodecamer of two sets of five different subunits: alpha, beta, gamma, delta and epsilon. Subunits alpha, beta and delta comprise a regulatory subcomplex and subunits epsilon and gamma comprise a catalytic subcomplex. Within the complex, the hexameric regulatory complex resides at the center, with the two heterodimeric catalytic subcomplexes bound on opposite sides.

Its subcellular location is the cytoplasm. The protein localises to the cytosol. Its activity is regulated as follows. Activated by the chemical integrated stress response (ISR) inhibitor ISRIB which stimulates guanine nucleotide exchange factor activity for both phosphorylated and unphosphorylated eIF2. Functionally, acts as a component of the translation initiation factor 2B (eIF2B) complex, which catalyzes the exchange of GDP for GTP on eukaryotic initiation factor 2 (eIF2) gamma subunit. Its guanine nucleotide exchange factor activity is repressed when bound to eIF2 complex phosphorylated on the alpha subunit, thereby limiting the amount of methionyl-initiator methionine tRNA available to the ribosome and consequently global translation is repressed. This chain is Translation initiation factor eIF2B subunit beta (EIF2B2), found in Homo sapiens (Human).